The chain runs to 383 residues: MTAPADLSPTLQLACDLIRRPSVTPVDADCQTVMMQRLGDAGFKLEPMRIEDVDNFWATHGTREGPVLCFAGHTDVVPTGPVQDWQNDPFDALIDEHGMLCGRGAADMKGSLAAMLVAAERFVADHPDHKGSVAFLITSDEEGPAHHGTKAVVERLAARNERLDWCIVGEPSSTTLVGDVVKNGRRGSLGAKLTVRGKQGHVAYPHLAKNPIHLATPALAELAAEHWDNGNDFFPPTSFQISNLNSGTGATNVIPGDLVAVFNFRFSTESTVEGLQQRVAAILDKHELDWHVDWALSGLPFLTEPGALLDAVSSSIKSVTGRDTKASTSGGTSDGRFIATLGTQVVELGPVNATIHQVNERILASDLDVLTEIYYQTLVKLLA.

Residue His73 participates in Zn(2+) binding. The active site involves Asp75. Asp107 is a Zn(2+) binding site. The active-site Proton acceptor is Glu141. Residues Glu142, Glu170, and His356 each coordinate Zn(2+).

Belongs to the peptidase M20A family. DapE subfamily. Homodimer. Zn(2+) serves as cofactor. The cofactor is Co(2+).

It catalyses the reaction N-succinyl-(2S,6S)-2,6-diaminopimelate + H2O = (2S,6S)-2,6-diaminopimelate + succinate. It participates in amino-acid biosynthesis; L-lysine biosynthesis via DAP pathway; LL-2,6-diaminopimelate from (S)-tetrahydrodipicolinate (succinylase route): step 3/3. Catalyzes the hydrolysis of N-succinyl-L,L-diaminopimelic acid (SDAP), forming succinate and LL-2,6-diaminopimelate (DAP), an intermediate involved in the bacterial biosynthesis of lysine and meso-diaminopimelic acid, an essential component of bacterial cell walls. This chain is Succinyl-diaminopimelate desuccinylase, found in Pseudomonas syringae pv. tomato (strain ATCC BAA-871 / DC3000).